Consider the following 81-residue polypeptide: D-alanyl carrier protein (81 aa).

The 81-residue stretch at 1-81 folds into the Carrier domain; it reads MADEAIKNGV…KIIAKVEQAQ (81 aa). Ser39 is modified (O-(pantetheine 4'-phosphoryl)serine).

It belongs to the DltC family. In terms of processing, 4'-phosphopantetheine is transferred from CoA to a specific serine of apo-DCP.

Its subcellular location is the cytoplasm. The protein operates within cell wall biogenesis; lipoteichoic acid biosynthesis. Its function is as follows. Carrier protein involved in the D-alanylation of lipoteichoic acid (LTA). The loading of thioester-linked D-alanine onto DltC is catalyzed by D-alanine--D-alanyl carrier protein ligase DltA. The DltC-carried D-alanyl group is further transferred to cell membrane phosphatidylglycerol (PG) by forming an ester bond, probably catalyzed by DltD. D-alanylation of LTA plays an important role in modulating the properties of the cell wall in Gram-positive bacteria, influencing the net charge of the cell wall. The polypeptide is D-alanyl carrier protein (Lacticaseibacillus rhamnosus (Lactobacillus rhamnosus)).